A 209-amino-acid chain; its full sequence is Uridine kinase (209 aa).

ATP is bound at residue 16 to 23 (GGSGSGKT).

This sequence belongs to the uridine kinase family.

The protein resides in the cytoplasm. The enzyme catalyses uridine + ATP = UMP + ADP + H(+). It catalyses the reaction cytidine + ATP = CMP + ADP + H(+). It functions in the pathway pyrimidine metabolism; CTP biosynthesis via salvage pathway; CTP from cytidine: step 1/3. The protein operates within pyrimidine metabolism; UMP biosynthesis via salvage pathway; UMP from uridine: step 1/1. In Lactiplantibacillus plantarum (strain ATCC BAA-793 / NCIMB 8826 / WCFS1) (Lactobacillus plantarum), this protein is Uridine kinase.